The sequence spans 164 residues: MSITFGELVGNFILVTGSVIVLLLLIKKFAWGAIESILQTRSQQISRDIDQAEQSRLSAQQLEAKSQANLDASRSQASKIISDAKEIGQLQGDKLVAEATDEAKRLKEKALTDIEQSKSDAISAVKTEMSDLTVLLAEKIMGANLDKTAQSQLIDSYLDDLGEA.

A helical transmembrane segment spans residues 6–26; it reads GELVGNFILVTGSVIVLLLLI.

It belongs to the ATPase B chain family. As to quaternary structure, F-type ATPases have 2 components, F(1) - the catalytic core - and F(0) - the membrane proton channel. F(1) has five subunits: alpha(3), beta(3), gamma(1), delta(1), epsilon(1). F(0) has three main subunits: a(1), b(2) and c(10-14). The alpha and beta chains form an alternating ring which encloses part of the gamma chain. F(1) is attached to F(0) by a central stalk formed by the gamma and epsilon chains, while a peripheral stalk is formed by the delta and b chains.

It localises to the cell membrane. In terms of biological role, f(1)F(0) ATP synthase produces ATP from ADP in the presence of a proton or sodium gradient. F-type ATPases consist of two structural domains, F(1) containing the extramembraneous catalytic core and F(0) containing the membrane proton channel, linked together by a central stalk and a peripheral stalk. During catalysis, ATP synthesis in the catalytic domain of F(1) is coupled via a rotary mechanism of the central stalk subunits to proton translocation. Component of the F(0) channel, it forms part of the peripheral stalk, linking F(1) to F(0). In Streptococcus pyogenes serotype M12 (strain MGAS2096), this protein is ATP synthase subunit b.